A 31-amino-acid polypeptide reads, in one-letter code: SISCGESCVYIPCTVTALVGCTCKDKVCYLN.

The segment at residues 1 to 31 (SISCGESCVYIPCTVTALVGCTCKDKVCYLN) is a cross-link (cyclopeptide (Ser-Asn)). Disulfide bonds link Cys4/Cys21, Cys8/Cys23, and Cys13/Cys28.

The protein belongs to the cyclotide family. Bracelet subfamily. Post-translationally, this is a cyclic peptide.

Its function is as follows. Probably participates in a plant defense mechanism. The sequence is that of Cyclotide Hyfl-A from Hybanthus floribundus (Greenviolet).